A 380-amino-acid polypeptide reads, in one-letter code: Actin-like protein arp10 (380 aa).

Belongs to the actin family. ARP10 subfamily.

Its subcellular location is the cytoplasm. The protein localises to the cytoskeleton. It is found in the nucleus. In Schizosaccharomyces pombe (strain 972 / ATCC 24843) (Fission yeast), this protein is Actin-like protein arp10 (arp10).